The sequence spans 360 residues: Phosphate acyltransferase (360 aa).

Residues 296–305 (STLRREHLDR) are compositionally biased toward basic and acidic residues. The disordered stretch occupies residues 296-360 (STLRREHLDR…LRTAEPPGSL (65 aa)). Positions 314 to 333 (PRQRRRPRRQKRRAACRPRP) are enriched in basic residues. The span at 334 to 350 (RSAAGRAPGSGVRGAAG) shows a compositional bias: low complexity.

Belongs to the PlsX family. Homodimer. Probably interacts with PlsY.

The protein localises to the cytoplasm. The catalysed reaction is a fatty acyl-[ACP] + phosphate = an acyl phosphate + holo-[ACP]. The protein operates within lipid metabolism; phospholipid metabolism. In terms of biological role, catalyzes the reversible formation of acyl-phosphate (acyl-PO(4)) from acyl-[acyl-carrier-protein] (acyl-ACP). This enzyme utilizes acyl-ACP as fatty acyl donor, but not acyl-CoA. This chain is Phosphate acyltransferase, found in Deinococcus radiodurans (strain ATCC 13939 / DSM 20539 / JCM 16871 / CCUG 27074 / LMG 4051 / NBRC 15346 / NCIMB 9279 / VKM B-1422 / R1).